The following is a 185-amino-acid chain: Large ribosomal subunit protein bL25 (185 aa).

The protein belongs to the bacterial ribosomal protein bL25 family. CTC subfamily. As to quaternary structure, part of the 50S ribosomal subunit; part of the 5S rRNA/L5/L18/L25 subcomplex. Contacts the 5S rRNA. Binds to the 5S rRNA independently of L5 and L18.

Its function is as follows. This is one of the proteins that binds to the 5S RNA in the ribosome where it forms part of the central protuberance. In Chlamydia abortus (strain DSM 27085 / S26/3) (Chlamydophila abortus), this protein is Large ribosomal subunit protein bL25.